The chain runs to 330 residues: Aspartate--ammonia ligase (330 aa).

The protein belongs to the class-II aminoacyl-tRNA synthetase family. AsnA subfamily.

It localises to the cytoplasm. It catalyses the reaction L-aspartate + NH4(+) + ATP = L-asparagine + AMP + diphosphate + H(+). The protein operates within amino-acid biosynthesis; L-asparagine biosynthesis; L-asparagine from L-aspartate (ammonia route): step 1/1. The sequence is that of Aspartate--ammonia ligase from Escherichia coli O139:H28 (strain E24377A / ETEC).